A 347-amino-acid chain; its full sequence is Bifunctional methylenetetrahydrofolate dehydrogenase/cyclohydrolase 2, mitochondrial (347 aa).

Residues 98 to 102 (YVRNK) and 145 to 147 (VQL) each bind substrate. NAD(+) is bound by residues 214–216 (GRS) and Arg-247. 323–327 (PGGVG) provides a ligand contact to substrate.

It belongs to the tetrahydrofolate dehydrogenase/cyclohydrolase family. It depends on Mg(2+) as a cofactor. Isoform 1, isoform 4 and isoform 5 are expressed in brain and placenta.

Its subcellular location is the mitochondrion inner membrane. The enzyme catalyses (6R)-5,10-methylene-5,6,7,8-tetrahydrofolate + NAD(+) = (6R)-5,10-methenyltetrahydrofolate + NADH. It catalyses the reaction (6R)-5,10-methenyltetrahydrofolate + H2O = (6R)-10-formyltetrahydrofolate + H(+). The catalysed reaction is (6R)-5,10-methylene-5,6,7,8-tetrahydrofolate + NADP(+) = (6R)-5,10-methenyltetrahydrofolate + NADPH. Its pathway is one-carbon metabolism; tetrahydrofolate interconversion. Functionally, bifunctional mitochondrial folate-interconverting enzyme that has both NAD/NADP-dependent methylenetetrahydrofolate dehydrogenase and methenyltetrahydrofolate cyclohydrolase activities. In Homo sapiens (Human), this protein is Bifunctional methylenetetrahydrofolate dehydrogenase/cyclohydrolase 2, mitochondrial.